The sequence spans 101 residues: Urease subunit beta (101 aa).

This sequence belongs to the urease beta subunit family. Heterotrimer of UreA (gamma), UreB (beta) and UreC (alpha) subunits. Three heterotrimers associate to form the active enzyme.

The protein localises to the cytoplasm. It catalyses the reaction urea + 2 H2O + H(+) = hydrogencarbonate + 2 NH4(+). It functions in the pathway nitrogen metabolism; urea degradation; CO(2) and NH(3) from urea (urease route): step 1/1. This Saccharophagus degradans (strain 2-40 / ATCC 43961 / DSM 17024) protein is Urease subunit beta.